The chain runs to 193 residues: Large ribosomal subunit protein bL25 (193 aa).

The protein belongs to the bacterial ribosomal protein bL25 family. CTC subfamily. In terms of assembly, part of the 50S ribosomal subunit; part of the 5S rRNA/L5/L18/L25 subcomplex. Contacts the 5S rRNA. Binds to the 5S rRNA independently of L5 and L18.

This is one of the proteins that binds to the 5S RNA in the ribosome where it forms part of the central protuberance. This chain is Large ribosomal subunit protein bL25, found in Oleidesulfovibrio alaskensis (strain ATCC BAA-1058 / DSM 17464 / G20) (Desulfovibrio alaskensis).